A 428-amino-acid chain; its full sequence is ATP-dependent RNA helicase RhlB (428 aa).

Positions 9–37 (KKFSDFALHPKVIEALDNKGFSNCTPIQA) match the Q motif motif. The Helicase ATP-binding domain maps to 40 to 219 (LPFTVEGRDV…FEQMNHAEYI (180 aa)). An ATP-binding site is contributed by 53–60 (AQTGTGKT). Residues 165 to 168 (DEAD) carry the DEAD box motif. Positions 245 to 390 (RLLQTLLEEE…VSKYNSQALL (146 aa)) constitute a Helicase C-terminal domain. Residues 392–428 (DLPAPKRRYRSRSGNHQRRNNLSHRNNTPRNNRKRSG) form a disordered region. A compositionally biased stretch (basic residues) spans 396-413 (PKRRYRSRSGNHQRRNNL).

It belongs to the DEAD box helicase family. RhlB subfamily. In terms of assembly, component of the RNA degradosome, which is a multiprotein complex involved in RNA processing and mRNA degradation.

It localises to the cytoplasm. It catalyses the reaction ATP + H2O = ADP + phosphate + H(+). Functionally, DEAD-box RNA helicase involved in RNA degradation. Has RNA-dependent ATPase activity and unwinds double-stranded RNA. The sequence is that of ATP-dependent RNA helicase RhlB from Photorhabdus laumondii subsp. laumondii (strain DSM 15139 / CIP 105565 / TT01) (Photorhabdus luminescens subsp. laumondii).